Here is a 95-residue protein sequence, read N- to C-terminus: Protein TusB (95 aa).

This sequence belongs to the DsrH/TusB family. Heterohexamer, formed by a dimer of trimers. The hexameric TusBCD complex contains 2 copies each of TusB, TusC and TusD. The TusBCD complex interacts with TusE.

It localises to the cytoplasm. Part of a sulfur-relay system required for 2-thiolation of 5-methylaminomethyl-2-thiouridine (mnm(5)s(2)U) at tRNA wobble positions. This chain is Protein TusB, found in Escherichia coli (strain K12 / MC4100 / BW2952).